We begin with the raw amino-acid sequence, 637 residues long: Extracellular metalloproteinase MEP (637 aa).

Residues 1 to 21 form the signal peptide; the sequence is MRSVDSLLLLGLTGLASQANA. Residues 22-246 constitute a propeptide that is removed on maturation; that stretch reads HPAKRQPNDS…VVGVVDYVAD (225 aa). Asn-288 carries an N-linked (GlcNAc...) asparagine glycan. His-431 provides a ligand contact to Zn(2+). The active site involves Glu-432. Residue His-435 participates in Zn(2+) binding.

This sequence belongs to the peptidase M36 family. It depends on Zn(2+) as a cofactor.

The protein resides in the secreted. Its function is as follows. Secreted metalloproteinase that probably acts as a virulence factor. Cleaves Z.mays Endochitinase A (CHIA) between residues 'Gly-29' and 'Cys-30'. The protein is Extracellular metalloproteinase MEP (MEP) of Fusarium vanettenii (strain ATCC MYA-4622 / CBS 123669 / FGSC 9596 / NRRL 45880 / 77-13-4) (Fusarium solani subsp. pisi).